A 685-amino-acid polypeptide reads, in one-letter code: Augmin complex subunit dgt5 (685 aa).

Coiled-coil stretches lie at residues Leu-87–Gln-165 and Asn-342–Leu-379.

In terms of assembly, component of the augmin complex composed of dgt2, dgt3, dgt4, dgt5, dgt6, msd1, msd5 and wac. The complex interacts directly or indirectly with microtubules and is required for centrosome-independent generation of spindle microtubules.

The protein resides in the cytoplasm. It localises to the cytoskeleton. Its subcellular location is the spindle. It is found in the chromosome. The protein localises to the centromere. The protein resides in the kinetochore. It localises to the microtubule organizing center. Its subcellular location is the centrosome. Functionally, as part of the augmin complex, plays a role in centrosome-independent generation of spindle microtubules. The complex is required for mitotic spindle assembly through its involvement in localizing gamma-tubulin to spindle microtubules. This chain is Augmin complex subunit dgt5, found in Drosophila melanogaster (Fruit fly).